The sequence spans 219 residues: Octanoyltransferase (219 aa).

The BPL/LPL catalytic domain maps to 31-219; the sequence is EDLPGFLVFC…KLKRRLLEVL (189 aa). Substrate-binding positions include 69 to 76, 153 to 155, and 166 to 168; these read RGGRATYH, SVG, and GAA. The active-site Acyl-thioester intermediate is Cys184.

Belongs to the LipB family.

It is found in the cytoplasm. It carries out the reaction octanoyl-[ACP] + L-lysyl-[protein] = N(6)-octanoyl-L-lysyl-[protein] + holo-[ACP] + H(+). It functions in the pathway protein modification; protein lipoylation via endogenous pathway; protein N(6)-(lipoyl)lysine from octanoyl-[acyl-carrier-protein]: step 1/2. Its function is as follows. Catalyzes the transfer of endogenously produced octanoic acid from octanoyl-acyl-carrier-protein onto the lipoyl domains of lipoate-dependent enzymes. Lipoyl-ACP can also act as a substrate although octanoyl-ACP is likely to be the physiological substrate. This Bdellovibrio bacteriovorus (strain ATCC 15356 / DSM 50701 / NCIMB 9529 / HD100) protein is Octanoyltransferase.